Reading from the N-terminus, the 104-residue chain is Large ribosomal subunit protein uL24 (104 aa).

Belongs to the universal ribosomal protein uL24 family. Part of the 50S ribosomal subunit.

In terms of biological role, one of two assembly initiator proteins, it binds directly to the 5'-end of the 23S rRNA, where it nucleates assembly of the 50S subunit. One of the proteins that surrounds the polypeptide exit tunnel on the outside of the subunit. The sequence is that of Large ribosomal subunit protein uL24 from Shewanella sediminis (strain HAW-EB3).